We begin with the raw amino-acid sequence, 308 residues long: Protoheme IX farnesyltransferase (308 aa).

The next 8 membrane-spanning stretches (helical) occupy residues 20–40 (LLAY…VTAI), 50–70 (AIHP…AAGA), 102–122 (NALA…WCAT), 124–144 (LLAG…YTLW), 149–169 (TSQN…IGWS), 170–190 (AITG…FFWT), 227–249 (LIYT…WLYG), and 288–308 (YLAV…PTLH).

This sequence belongs to the UbiA prenyltransferase family. Protoheme IX farnesyltransferase subfamily.

The protein localises to the cell membrane. The enzyme catalyses heme b + (2E,6E)-farnesyl diphosphate + H2O = Fe(II)-heme o + diphosphate. Its pathway is porphyrin-containing compound metabolism; heme O biosynthesis; heme O from protoheme: step 1/1. Functionally, converts heme B (protoheme IX) to heme O by substitution of the vinyl group on carbon 2 of heme B porphyrin ring with a hydroxyethyl farnesyl side group. The chain is Protoheme IX farnesyltransferase from Mycobacterium tuberculosis (strain ATCC 25618 / H37Rv).